Here is a 422-residue protein sequence, read N- to C-terminus: Serine hydroxymethyltransferase (422 aa).

Residues Leu120 and 124-126 (GHL) each bind (6S)-5,6,7,8-tetrahydrofolate. An N6-(pyridoxal phosphate)lysine modification is found at Lys228.

It belongs to the SHMT family. In terms of assembly, homodimer. Pyridoxal 5'-phosphate is required as a cofactor.

It is found in the cytoplasm. It carries out the reaction (6R)-5,10-methylene-5,6,7,8-tetrahydrofolate + glycine + H2O = (6S)-5,6,7,8-tetrahydrofolate + L-serine. It functions in the pathway one-carbon metabolism; tetrahydrofolate interconversion. Its pathway is amino-acid biosynthesis; glycine biosynthesis; glycine from L-serine: step 1/1. In terms of biological role, catalyzes the reversible interconversion of serine and glycine with tetrahydrofolate (THF) serving as the one-carbon carrier. This reaction serves as the major source of one-carbon groups required for the biosynthesis of purines, thymidylate, methionine, and other important biomolecules. Also exhibits THF-independent aldolase activity toward beta-hydroxyamino acids, producing glycine and aldehydes, via a retro-aldol mechanism. The protein is Serine hydroxymethyltransferase of Actinobacillus succinogenes (strain ATCC 55618 / DSM 22257 / CCUG 43843 / 130Z).